Consider the following 302-residue polypeptide: Stanniocalcin-2 (302 aa).

The first 24 residues, 1 to 24, serve as a signal peptide directing secretion; sequence MCAERLGQFMTLALVLATFDPARG. The segment at 23–44 is disordered; the sequence is RGTDATNPPEGPQDRSSQQKGR. N73 carries N-linked (GlcNAc...) asparagine glycosylation. The segment at 217–302 is disordered; that stretch reads KPPTAPPERQ…EQSEYSDIRR (86 aa). Positions 227 to 264 are enriched in basic and acidic residues; it reads PQVDRTKLSRAHHGEAGHHLPEPSSRETGRGAKGERGS. 2 positions are modified to phosphoserine; by FAM20C: S250 and S251. At T254 the chain carries Phosphothreonine; by FAM20C.

The protein belongs to the stanniocalcin family. As to quaternary structure, homodimer; disulfide-linked. As to expression, expressed in a variety of tissues including muscle, heart, pancreas, kidney, spleen, prostate, small intestine, colon and peripheral blood leukocytes.

It localises to the secreted. Its function is as follows. Has an anti-hypocalcemic action on calcium and phosphate homeostasis. The chain is Stanniocalcin-2 (STC2) from Homo sapiens (Human).